Consider the following 208-residue polypeptide: Small ribosomal subunit protein uS4 (208 aa).

The 67-residue stretch at 95 to 161 (MRLDALVLRA…VPLQVAAAGA (67 aa)) folds into the S4 RNA-binding domain.

Belongs to the universal ribosomal protein uS4 family. As to quaternary structure, part of the 30S ribosomal subunit. Contacts protein S5. The interaction surface between S4 and S5 is involved in control of translational fidelity.

Its function is as follows. One of the primary rRNA binding proteins, it binds directly to 16S rRNA where it nucleates assembly of the body of the 30S subunit. Functionally, with S5 and S12 plays an important role in translational accuracy. This chain is Small ribosomal subunit protein uS4, found in Pseudarthrobacter chlorophenolicus (strain ATCC 700700 / DSM 12829 / CIP 107037 / JCM 12360 / KCTC 9906 / NCIMB 13794 / A6) (Arthrobacter chlorophenolicus).